Consider the following 467-residue polypeptide: FK506-binding protein 4 (467 aa).

Disordered regions lie at residues 64 to 163 (KATG…GDDD) and 208 to 357 (GNFV…KPTS). Composition is skewed to acidic residues over residues 71–80 (DDDDEEEDEY), 147–163 (SDEE…GDDD), and 213–254 (PEDD…DELD). Composition is skewed to basic and acidic residues over residues 271–287 (APKL…RPAE) and 312–332 (QKVE…DKKV). The region spanning 381 to 467 (GDRVGMRYIG…IFDVKLLEIK (87 aa)) is the PPIase FKBP-type domain.

This sequence belongs to the FKBP-type PPIase family. FKBP3/4 subfamily. In terms of assembly, binds to histones H3 and H4.

The protein resides in the nucleus. It carries out the reaction [protein]-peptidylproline (omega=180) = [protein]-peptidylproline (omega=0). Inhibited by both FK506 and rapamycin. Its function is as follows. PPIase that acts as a histone chaperone. Histone proline isomerase that increases the rate of cis-trans isomerization at prolines on the histone H3 N-terminal tail. Proline isomerization influences H3 methylation thereby regulating gene expression. The chain is FK506-binding protein 4 (fkr-4) from Neurospora crassa (strain ATCC 24698 / 74-OR23-1A / CBS 708.71 / DSM 1257 / FGSC 987).